The chain runs to 1168 residues: DNA-directed RNA polymerase subunit beta (1168 aa).

The protein belongs to the RNA polymerase beta chain family. The RNAP catalytic core consists of 2 alpha, 1 beta, 1 beta' and 1 omega subunit. When a sigma factor is associated with the core the holoenzyme is formed, which can initiate transcription.

The catalysed reaction is RNA(n) + a ribonucleoside 5'-triphosphate = RNA(n+1) + diphosphate. DNA-dependent RNA polymerase catalyzes the transcription of DNA into RNA using the four ribonucleoside triphosphates as substrates. The chain is DNA-directed RNA polymerase subunit beta from Rhodococcus opacus (strain B4).